A 779-amino-acid polypeptide reads, in one-letter code: Phosphoribosylformylglycinamidine synthase subunit PurL (779 aa).

Histidine 52 is a catalytic residue. Positions 55 and 94 each coordinate ATP. Glutamate 96 is a binding site for Mg(2+). Substrate-binding positions include 97-100 (SHNH) and arginine 119. Residue histidine 98 is the Proton acceptor of the active site. Aspartate 120 serves as a coordination point for Mg(2+). Residue glutamine 243 coordinates substrate. Mg(2+) is bound at residue aspartate 271. 315-317 (ESQ) is a binding site for substrate. Residues asparagine 523 and glycine 560 each coordinate ATP. Asparagine 561 contacts Mg(2+). A substrate-binding site is contributed by serine 563.

It belongs to the FGAMS family. Monomer. Part of the FGAM synthase complex composed of 1 PurL, 1 PurQ and 2 PurS subunits.

It is found in the cytoplasm. It carries out the reaction N(2)-formyl-N(1)-(5-phospho-beta-D-ribosyl)glycinamide + L-glutamine + ATP + H2O = 2-formamido-N(1)-(5-O-phospho-beta-D-ribosyl)acetamidine + L-glutamate + ADP + phosphate + H(+). It participates in purine metabolism; IMP biosynthesis via de novo pathway; 5-amino-1-(5-phospho-D-ribosyl)imidazole from N(2)-formyl-N(1)-(5-phospho-D-ribosyl)glycinamide: step 1/2. In terms of biological role, part of the phosphoribosylformylglycinamidine synthase complex involved in the purines biosynthetic pathway. Catalyzes the ATP-dependent conversion of formylglycinamide ribonucleotide (FGAR) and glutamine to yield formylglycinamidine ribonucleotide (FGAM) and glutamate. The FGAM synthase complex is composed of three subunits. PurQ produces an ammonia molecule by converting glutamine to glutamate. PurL transfers the ammonia molecule to FGAR to form FGAM in an ATP-dependent manner. PurS interacts with PurQ and PurL and is thought to assist in the transfer of the ammonia molecule from PurQ to PurL. This chain is Phosphoribosylformylglycinamidine synthase subunit PurL, found in Prochlorococcus marinus (strain MIT 9515).